The chain runs to 237 residues: Ribonuclease PH (237 aa).

Phosphate contacts are provided by residues Arg-86 and 124–126; that span reads GTR.

Belongs to the RNase PH family. As to quaternary structure, homohexameric ring arranged as a trimer of dimers.

The enzyme catalyses tRNA(n+1) + phosphate = tRNA(n) + a ribonucleoside 5'-diphosphate. Functionally, phosphorolytic 3'-5' exoribonuclease that plays an important role in tRNA 3'-end maturation. Removes nucleotide residues following the 3'-CCA terminus of tRNAs; can also add nucleotides to the ends of RNA molecules by using nucleoside diphosphates as substrates, but this may not be physiologically important. Probably plays a role in initiation of 16S rRNA degradation (leading to ribosome degradation) during starvation. This is Ribonuclease PH from Shewanella woodyi (strain ATCC 51908 / MS32).